A 167-amino-acid chain; its full sequence is Shikimate kinase (167 aa).

12-17 (GSGKTT) is a binding site for ATP. Thr-16 serves as a coordination point for Mg(2+). Substrate contacts are provided by Asp-34, Arg-58, and Gly-80. Arg-117 is a binding site for ATP. Position 135 (Arg-135) interacts with substrate. Residue Arg-152 participates in ATP binding.

It belongs to the shikimate kinase family. Monomer. Requires Mg(2+) as cofactor.

It is found in the cytoplasm. It carries out the reaction shikimate + ATP = 3-phosphoshikimate + ADP + H(+). It functions in the pathway metabolic intermediate biosynthesis; chorismate biosynthesis; chorismate from D-erythrose 4-phosphate and phosphoenolpyruvate: step 5/7. Catalyzes the specific phosphorylation of the 3-hydroxyl group of shikimic acid using ATP as a cosubstrate. In Salinispora tropica (strain ATCC BAA-916 / DSM 44818 / JCM 13857 / NBRC 105044 / CNB-440), this protein is Shikimate kinase.